A 311-amino-acid chain; its full sequence is Methionyl-tRNA formyltransferase (311 aa).

Position 110-113 (110-113 (SLLP)) interacts with (6S)-5,6,7,8-tetrahydrofolate.

The protein belongs to the Fmt family.

It carries out the reaction L-methionyl-tRNA(fMet) + (6R)-10-formyltetrahydrofolate = N-formyl-L-methionyl-tRNA(fMet) + (6S)-5,6,7,8-tetrahydrofolate + H(+). Attaches a formyl group to the free amino group of methionyl-tRNA(fMet). The formyl group appears to play a dual role in the initiator identity of N-formylmethionyl-tRNA by promoting its recognition by IF2 and preventing the misappropriation of this tRNA by the elongation apparatus. This Streptococcus pyogenes serotype M2 (strain MGAS10270) protein is Methionyl-tRNA formyltransferase.